The sequence spans 176 residues: Scytalone dehydratase-like protein AacuK (176 aa).

Residues Tyr26 and Tyr46 each coordinate substrate. Residues His81 and His107 contribute to the active site.

It belongs to the scytalone dehydratase family.

It functions in the pathway secondary metabolite biosynthesis. Functionally, scytalone dehydratase-like protein; part of the gene cluster that mediates the biosynthesis of the tetrahydroxanthone dimer secalonic acid D. The pathway begins with the synthesis of atrochrysone thioester by the polyketide synthase AacuL. The atrochrysone carboxyl ACP thioesterase AacuM then breaks the thioester bond and releases the atrochrysone carboxylic acid from AacuL. Atrochrysone carboxylic acid is decarboxylated by the decarboxylase AacuI, and oxidized by the anthrone oxygenase AacuG to yield emodin. Emodin is then reduced to emodin hydroquinone by a yet unidentified oxidoreductase. A-ring reduction by the short chain dehydrogenase AacuN, dehydration by the scytalone dehydratase-like protein AacuK and probable spontaneous re-oxidation, results in overall deoxygenation to chrysophanol. Baeyer-Villiger oxidation by the Baeyer-Villiger monooxygenase (BVMO) AacuH then yields monodictyphenone. Monodictyphenone is transformed into compounds with the tetrahydroxanthone skeleton via methylesterification by the methyltransferase AacuQ, followed by the action of the flavin-dependent monooxygenase AacuC, the isomerase AacuP, and the short chain dehydrogenase/reductase AacuF or AacuD. AacuF and AacuD should accept the same compound as a substrate but perform the ketoreduction with a different stereoselectivity, thus yielding blennolides B and A, respectively. In the final step of the biosynthesis, the cytochrome P450 monooxygenase AacuE accepts blennolide B and/or blennolide A to conduct the dimerization reaction to furnish the tetrahydroxanthone dimers, secalonic acids D, B, and F. The sequence is that of Scytalone dehydratase-like protein AacuK from Aspergillus aculeatus (strain ATCC 16872 / CBS 172.66 / WB 5094).